A 172-amino-acid polypeptide reads, in one-letter code: Ribosomally synthesized cyclic peptide phomopsin precursor phomA (172 aa).

Residues 1-18 form the signal peptide; the sequence is MRFTPAIVIAAFCSLAVA. 11 consecutive propeptides follow at residues 19-35, 42-50, 57-65, 72-79, 86-93, 100-108, 115-122, 129-137, 144-151, 158-165, and Lys172; these read APAA…AVED, KKRGEAVED, KRGEAVED, and RKRGEAVED.

Post-translationally, phomA is processed by several endopeptidases including kexin proteases as well as the cluster-specific S41 family peptidase phomP1 and the oligopeptidase phomG to produce 10 identical copies of the hexapeptide Tyr-Val-Ile-Pro-Ile-Asp, that is further modified to yield phomapsins. The timing and order of proteolysis of the phomA precursor and PTMs are still unknown. Two tyrosinase-like enzymes, phomQ1 and phomQ2, catalyze the chlorination and hydroxylation of Tyr, respectively. PhomYb, is proposed to be involved in the construction of the macrocyclic structure. The other 4 ustYa family proteins may be involved in PTMs that generate the unique structure of phomopsin A. PhomYa is required for the hydroxylation of C-beta of Tyr. PhomYc, phomYd, and phomYe are responsible for the biosynthesis of 2,3-dehydroisoleucine (dIle), 2,3-dehydroaspartic acid (dAsp), and 3,4-dehydroproline (dPro), respectively. While dIle formation by phomYc is indispensable for the installation of dAsp by phomYd, the order of the other PTMs have not been elucidated yet. Most of the biosynthetic enzymes likely have broad substrate specificity, and thus, there might be a metabolic grid from a precursor to phomopsin A. The enzyme(s) responsible for the biosynthesis of 3,4-dehydrovaline (dVal) have also not been identified yet. Finally, phomM acts as an S-adenosylmethionine-dependent alpha-N-methyltransferase that catalyzes two successive N-methylation reactions, converting N-desmethyl-phomopsin A to phomopsin A and phomopsin A further to an N,N-dimethylated congener called phomopsin E.

It participates in mycotoxin biosynthesis. Functionally, ribosomally synthesized cyclic peptide phomopsin precursor; part of the gene cluster that mediates the biosynthesis of the phomopsins, a group of hexapeptide mycotoxins which infects lupins and causes lupinosis disease in livestock. The phomA translated product contains a 10-fold repeated peptide embedding the hexapeptide Tyr-Val-Ile-Pro-Ile-Asp, that is converted into phomapsins. After being excised from the precursor peptide by kexin proteases, the core peptides are cyclized and modified post-translationally by enzymes encoded within the corresponding gene cluster. This chain is Ribosomally synthesized cyclic peptide phomopsin precursor phomA, found in Diaporthe leptostromiformis (Lupinosis disease fungus).